Reading from the N-terminus, the 156-residue chain is Ribosomal RNA large subunit methyltransferase H (156 aa).

Residues G104 and L123–L128 each bind S-adenosyl-L-methionine.

This sequence belongs to the RNA methyltransferase RlmH family. In terms of assembly, homodimer.

The protein resides in the cytoplasm. It carries out the reaction pseudouridine(1915) in 23S rRNA + S-adenosyl-L-methionine = N(3)-methylpseudouridine(1915) in 23S rRNA + S-adenosyl-L-homocysteine + H(+). Its function is as follows. Specifically methylates the pseudouridine at position 1915 (m3Psi1915) in 23S rRNA. This is Ribosomal RNA large subunit methyltransferase H from Nitrosospira multiformis (strain ATCC 25196 / NCIMB 11849 / C 71).